The primary structure comprises 178 residues: Actin-related protein 2/3 complex subunit 3-A (178 aa).

It belongs to the ARPC3 family. As to quaternary structure, component of the Arp2/3 complex composed of actr2/arp2, actr3/arp3, arpc1 (arpc1a or arpc1b), arpc2, arpc3, arpc4 and arpc5.

It localises to the cytoplasm. Its subcellular location is the cytoskeleton. The protein localises to the cell projection. It is found in the nucleus. Its function is as follows. Component of the Arp2/3 complex, a multiprotein complex that mediates actin polymerization upon stimulation by nucleation-promoting factor (NPF). The Arp2/3 complex mediates the formation of branched actin networks in the cytoplasm, providing the force for cell motility. In addition to its role in the cytoplasmic cytoskeleton, the Arp2/3 complex also promotes actin polymerization in the nucleus, thereby regulating gene transcription and repair of damaged DNA. The Arp2/3 complex promotes homologous recombination (HR) repair in response to DNA damage by promoting nuclear actin polymerization, leading to drive motility of double-strand breaks (DSBs). This Xenopus laevis (African clawed frog) protein is Actin-related protein 2/3 complex subunit 3-A (arpc3-a).